Here is a 432-residue protein sequence, read N- to C-terminus: Adenosylhomocysteinase (432 aa).

Ser-2 carries the N-acetylserine modification. Residues Thr-57, Asp-131, and Glu-156 each contribute to the substrate site. Position 157–159 (157–159) interacts with NAD(+); that stretch reads TTT. Phosphoserine is present on Ser-183. Lys-186 and Asp-190 together coordinate substrate. Lys-186 carries the post-translational modification N6-(2-hydroxyisobutyryl)lysine. A Phosphotyrosine modification is found at Tyr-193. NAD(+)-binding positions include 222-227, Glu-243, Asn-248, 299-301, Asn-346, and His-353; these read GDVGKG and IGH.

It belongs to the adenosylhomocysteinase family. Homotetramer. Interaction with AHCYL1. NAD(+) serves as cofactor.

It localises to the cytoplasm. The protein resides in the melanosome. The protein localises to the nucleus. It is found in the endoplasmic reticulum. It catalyses the reaction S-adenosyl-L-homocysteine + H2O = L-homocysteine + adenosine. The protein operates within amino-acid biosynthesis; L-homocysteine biosynthesis; L-homocysteine from S-adenosyl-L-homocysteine: step 1/1. Its function is as follows. Catalyzes the hydrolysis of S-adenosyl-L-homocysteine to form adenosine and homocysteine. Binds copper ions. This Homo sapiens (Human) protein is Adenosylhomocysteinase (AHCY).